A 105-amino-acid chain; its full sequence is Cuticle protein AMP2 (105 aa).

Residues 1–21 form a disordered region; it reads DRDAQTLTDERSDQGDGNFRY. The region spanning 16–81 is the Chitin-binding type R&amp;R domain; the sequence is DGNFRYEFET…PSSDLLPVGP (66 aa).

Arthrodial membrane.

The chain is Cuticle protein AMP2 from Homarus americanus (American lobster).